The chain runs to 635 residues: MIRVICNNETVELPKGATAADFASKIKNSHYFAGVVINDQIKDLSTTLNEGDTLRFVTFEDSEGREIFLHTSAHILAQAVLRLWPQAVPTIGPVINQGFYYDFANLSVSEEDLLAIENMMEQIVQEKLEVSKKTFNGKEEALKEFMHNAFKAELIQELPEGESITAYSQGEFMDLCRGPHLPSTAPVKAFKLLRTSAAYWRGDPSRESLVRIYGISFPTTKELKEHLHQLEEAKKRDHRVLGAKLDLFSQQECSAGMPFFHPRGMIVWDALIGYWQRLHQLAGYKQILTPQLMNRSLWETSGHWSNYKANMYTLKIDEEDYAIKPMNCPGCMLYYKTRLHSYKEFPLRIAEIGHVHRYEVSGALSGLMRVRAFHQDDAHVFLTPEQVEEETLNILNLVSELYSTFGLEYHLELSTRPEKDTIGSDELWELATSALERALINSNTPFIINPGDGAFYGPKIDIHVKDAIQRTWQCGTIQLDMFLPERFELEYTNAQGEKSTPIMLHRALFGSIERFLGILIEHFKGKFPLWLSPEHIRLITVADRHQPHAKELAAAWQKLGLVVTVDDSNESVSKKIRNAQNMQVNYMVTLGDREIEENTLAIRTRDNRVLNAMTVETFINTILEEKNSLSLTPLL.

One can recognise a TGS domain in the interval 1-58 (MIRVICNNETVELPKGATAADFASKIKNSHYFAGVVINDQIKDLSTTLNEGDTLRFVT). The interval 237-528 (DHRVLGAKLD…LIEHFKGKFP (292 aa)) is catalytic. Zn(2+) contacts are provided by cysteine 328, histidine 379, and histidine 505.

This sequence belongs to the class-II aminoacyl-tRNA synthetase family. In terms of assembly, homodimer. The cofactor is Zn(2+).

The protein resides in the cytoplasm. It carries out the reaction tRNA(Thr) + L-threonine + ATP = L-threonyl-tRNA(Thr) + AMP + diphosphate + H(+). Its function is as follows. Catalyzes the attachment of threonine to tRNA(Thr) in a two-step reaction: L-threonine is first activated by ATP to form Thr-AMP and then transferred to the acceptor end of tRNA(Thr). Also edits incorrectly charged L-seryl-tRNA(Thr). The polypeptide is Threonine--tRNA ligase (Chlamydia caviae (strain ATCC VR-813 / DSM 19441 / 03DC25 / GPIC) (Chlamydophila caviae)).